Consider the following 203-residue polypeptide: Thymidylate kinase (203 aa).

10 to 17 (GVEGSGKT) is a binding site for ATP.

The protein belongs to the thymidylate kinase family.

The enzyme catalyses dTMP + ATP = dTDP + ADP. Its function is as follows. Phosphorylation of dTMP to form dTDP in both de novo and salvage pathways of dTTP synthesis. This is Thymidylate kinase from Carboxydothermus hydrogenoformans (strain ATCC BAA-161 / DSM 6008 / Z-2901).